Here is an 82-residue protein sequence, read N- to C-terminus: Putative Fe(2+) transport protein A (82 aa).

It belongs to the FeoA family.

In terms of biological role, might be involved in Fe(2+) ion uptake. This Leptolyngbya boryana (Plectonema boryanum) protein is Putative Fe(2+) transport protein A.